We begin with the raw amino-acid sequence, 160 residues long: Large ribosomal subunit protein uL16 (160 aa).

It belongs to the universal ribosomal protein uL16 family. In terms of assembly, part of the 50S ribosomal subunit.

In terms of biological role, binds 23S rRNA and is also seen to make contacts with the A and possibly P site tRNAs. The sequence is that of Large ribosomal subunit protein uL16 from Prochlorococcus marinus (strain MIT 9515).